The primary structure comprises 815 residues: MAGGHCGSFPAAAAGSGEIVQLNVGGTRFSTSRQTLMWIPDSFFSSLLSGRISTLRDETGAIFIDRDPAAFAPILNFLRTKELDLRGVSINVLRHEAEFYGITPLVRRLLLCEELERSSCGSVLFHGYLPPPGIPSRKINNTVRSADSRNGLNSTEGEARGNGTQPVLSGTGEETVRLGFPVDPRKVLIVAGHHNWIVAAYAHFAVCYRIKESSGWQQVFTSPYLDWTIERVALNAKVVGGPHGDKDKMVAVASESSIILWSVQDGGSGSEIGVFSLGVPVDALFFIGNQLVATSHTGKVGVWNAVTQHWQVQDVVPITSYDTAGSFLLLGCNNGSIYYIDMQKFPLRMKDNDLLVTELYHDPSNDAITALSVYLTPKTSVSGNWIEIAYGTSSGAVRVIVQHPETVGSGPQLFQTFTVHRSPVTKIMLSEKHLVSVCADNNHVRTWTVTRFRGMISTQPGSTPLASFKILSLEETESHGSYSSGNDIGPFGERDDQQVFIQKVVPITNKLFVRLSSTGKRICEIQAVDCTTISSFTVRECEGSSRMGSRPRRYLFTGHTNGSIQMWDLTTAMDMVNKSEDKDVGGPTEEELLKLLDQCDLSTSRCATPNISPATSVVQHSHLRESNSSLQLQHHDTTHEAATYGSMRPYRESPLLARARRTESFHSYRDFQTINLNRNVERAVPENGNLGPIQAEVKGATGECNISERKSPGVEIKSLRELDSGLEVHKIAEGFSESKKRSSEDENENKIEFRKKGGFEGGGFLGRKKVPYLASSPSTSDGGTDSPGTASPSPTKTTPSPRHKKSDSSGQEYSL.

One can recognise a BTB domain in the interval 18 to 87; the sequence is EIVQLNVGGT…LRTKELDLRG (70 aa). Polar residues predominate over residues 139–168; sequence INNTVRSADSRNGLNSTEGEARGNGTQPVL. Positions 139–170 are disordered; the sequence is INNTVRSADSRNGLNSTEGEARGNGTQPVLSG. 8 WD repeats span residues 174–218, 224–263, 270–305, 310–342, 354–404, 412–449, 457–504, and 510–569; these read ETVR…GWQQ, YLDWTIERVALNAKVVGGPHGDKDKMVAVASESSIILWSV, SEIGVFSLGVPVDALFFIGNQLVATSHTGKVGVWNA, WQVQDVVPITSYDTAGSFLLLGCNNGSIYYIDM, LLVT…VQHP, QLFQTFTVHRSPVTKIMLSEKHLVSVCADNNHVRTWTV, STQP…IQKV, and KLFV…MWDL. Residues 512–815 form an interaction with HCN3 region; the sequence is FVRLSSTGKR…SDSSGQEYSL (304 aa). A phosphoserine mark is found at Ser604, Ser664, and Ser711. Basic and acidic residues predominate over residues 736–758; that stretch reads SESKKRSSEDENENKIEFRKKGG. Residues 736–815 are disordered; it reads SESKKRSSED…SDSSGQEYSL (80 aa). Positions 774–800 are enriched in low complexity; it reads ASSPSTSDGGTDSPGTASPSPTKTTPS. Phosphoserine is present on Ser793.

The protein belongs to the KCTD3 family. In terms of assembly, interacts with HCN3. Broadly expressed in normal tissues.

The protein localises to the cell membrane. Functionally, accessory subunit of potassium/sodium hyperpolarization-activated cyclic nucleotide-gated channel 3 (HCN3) up-regulating its cell-surface expression and current density without affecting its voltage dependence and kinetics. The protein is BTB/POZ domain-containing protein KCTD3 (KCTD3) of Homo sapiens (Human).